The sequence spans 130 residues: UPF0102 protein BT_1882 (130 aa).

This sequence belongs to the UPF0102 family.

The sequence is that of UPF0102 protein BT_1882 from Bartonella tribocorum (strain CIP 105476 / IBS 506).